The chain runs to 74 residues: Exodeoxyribonuclease 7 small subunit (74 aa).

It belongs to the XseB family. In terms of assembly, heterooligomer composed of large and small subunits.

Its subcellular location is the cytoplasm. The catalysed reaction is Exonucleolytic cleavage in either 5'- to 3'- or 3'- to 5'-direction to yield nucleoside 5'-phosphates.. Bidirectionally degrades single-stranded DNA into large acid-insoluble oligonucleotides, which are then degraded further into small acid-soluble oligonucleotides. The protein is Exodeoxyribonuclease 7 small subunit of Symbiobacterium thermophilum (strain DSM 24528 / JCM 14929 / IAM 14863 / T).